Consider the following 469-residue polypeptide: Glutamate--tRNA ligase (469 aa).

Positions 11–21 match the 'HIGH' region motif; that stretch reads PSPTGFIHLGN. The short motif at 243–247 is the 'KMSKS' region element; that stretch reads KMSKR. Lysine 246 is a binding site for ATP.

The protein belongs to the class-I aminoacyl-tRNA synthetase family. Glutamate--tRNA ligase type 1 subfamily. In terms of assembly, monomer.

Its subcellular location is the cytoplasm. It carries out the reaction tRNA(Glu) + L-glutamate + ATP = L-glutamyl-tRNA(Glu) + AMP + diphosphate. Its function is as follows. Catalyzes the attachment of glutamate to tRNA(Glu) in a two-step reaction: glutamate is first activated by ATP to form Glu-AMP and then transferred to the acceptor end of tRNA(Glu). The chain is Glutamate--tRNA ligase from Burkholderia cenocepacia (strain HI2424).